The following is a 480-amino-acid chain: MFS-type transporter oryF (480 aa).

Residues 1–10 (MAEEVNERTR) show a composition bias toward basic and acidic residues. The tract at residues 1-24 (MAEEVNERTRLLSQSDDPSPSLEE) is disordered. A compositionally biased stretch (low complexity) spans 11–22 (LLSQSDDPSPSL). 12 helical membrane passes run 41-61 (LCIA…AIIV), 81-101 (AFVS…GPLS), 107-127 (ISLL…CAFA), 138-158 (FITG…IGDL), 170-190 (LYTL…AYIV), 197-217 (AIFA…LCTL), 264-284 (FLGT…LFGL), 308-328 (ALNY…TGSL), 351-371 (ILML…GWSA), 378-398 (IMPN…YQCI), 415-435 (GALT…APLI), and 443-463 (WGSS…PILL).

It belongs to the major facilitator superfamily.

The protein resides in the membrane. MFS-type transporter; part of the gene cluster that mediates the biosynthesis of oryzines, natural products with an unusual maleidride backbone. This Aspergillus oryzae (strain ATCC 42149 / RIB 40) (Yellow koji mold) protein is MFS-type transporter oryF.